Reading from the N-terminus, the 395-residue chain is L-methionine gamma-lyase (395 aa).

Residues 56 to 58 and 86 to 87 each bind pyridoxal 5'-phosphate; these read YTR and GM. Residue tyrosine 111 coordinates substrate. 206–208 contributes to the pyridoxal 5'-phosphate binding site; sequence SAT. An N6-(pyridoxal phosphate)lysine modification is found at lysine 209. Residue arginine 373 coordinates substrate.

It belongs to the trans-sulfuration enzymes family. L-methionine gamma-lyase subfamily. In terms of assembly, homotetramer. Pyridoxal 5'-phosphate is required as a cofactor.

The catalysed reaction is L-methionine + H2O = methanethiol + 2-oxobutanoate + NH4(+). It carries out the reaction L-homocysteine + H2O = 2-oxobutanoate + hydrogen sulfide + NH4(+) + H(+). The enzyme catalyses L-cysteine + H2O = hydrogen sulfide + pyruvate + NH4(+) + H(+). In terms of biological role, catalyzes the alpha,gamma-elimination of L-methionine to produce methanethiol, 2-oxobutanoate and ammonia, and that of L-homocysteine. Can also use L-cysteine as substrate, catalyzing its alpha,beta-elimination; this activity seems to only minimally contribute to the production of hydrogen sulfide (H2S) by F.nucleatum in the oral cavity, which is toxic for a large variety of cells in periodontal regions. The sequence is that of L-methionine gamma-lyase from Fusobacterium nucleatum subsp. nucleatum (strain ATCC 25586 / DSM 15643 / BCRC 10681 / CIP 101130 / JCM 8532 / KCTC 2640 / LMG 13131 / VPI 4355).